Consider the following 320-residue polypeptide: NAD kinase (320 aa).

Aspartate 96 acts as the Proton acceptor in catalysis. Residues 96–97 (DG), arginine 101, 170–171 (NE), aspartate 200, and 211–216 (TAYAFS) each bind NAD(+).

It belongs to the NAD kinase family. A divalent metal cation serves as cofactor.

It is found in the cytoplasm. The enzyme catalyses NAD(+) + ATP = ADP + NADP(+) + H(+). Functionally, involved in the regulation of the intracellular balance of NAD and NADP, and is a key enzyme in the biosynthesis of NADP. Catalyzes specifically the phosphorylation on 2'-hydroxyl of the adenosine moiety of NAD to yield NADP. In Rhodococcus opacus (strain B4), this protein is NAD kinase.